The primary structure comprises 539 residues: MPTALPAWQSLSQHAQAIRATHMRDWFAAPDAEQRVHAFTVEAAGLTLDYAKNRITPETLALLLQLADEAGVLTLRDAMLRGERINNTEHRSVLHAALRGHAEDDYRANGAAVMPDVLRVRAQMRDFAQRVHSGTWTGHAGQRITDVVNIGIGGSDLGPRMVCRALAHLAVPQVRVHFVSNVDGTDLAETLAGLNPDTTLAIVCSKTFTTLETMANAHSMRRWFIEHGVPEAQLKQHFVAVSTNRDAVVAFGIDPDNMFTFWDWVGGRFSLWSAVGLSIVLAIGPEQFETMLDGARAMDRHFASAAPRENMPLILGLLSVWYRGFFGAASACTVPYCAPLELLTDFMQQLEMESNGKSVQRNGAAIGTDTGPIVWGTAGTNGQHAYFQLIHQGSQIVPVDFITTLEPVRSLPGHHTKLLANCFAQGEALLRGRTAEEVRADGITDAALVPHMVFEGNRPSNTILMQRLDAASLGALIACAEHRTFVQGAVWNINSFDQWGVELGKKLAKPILEELEGAPASVAHDASTAALIRRAKAAR.

Glu-353 (proton donor) is an active-site residue. Residues His-384 and Lys-505 contribute to the active site.

The protein belongs to the GPI family.

It localises to the cytoplasm. The catalysed reaction is alpha-D-glucose 6-phosphate = beta-D-fructose 6-phosphate. Its pathway is carbohydrate biosynthesis; gluconeogenesis. The protein operates within carbohydrate degradation; glycolysis; D-glyceraldehyde 3-phosphate and glycerone phosphate from D-glucose: step 2/4. Its function is as follows. Catalyzes the reversible isomerization of glucose-6-phosphate to fructose-6-phosphate. The sequence is that of Glucose-6-phosphate isomerase from Ralstonia nicotianae (strain ATCC BAA-1114 / GMI1000) (Ralstonia solanacearum).